The primary structure comprises 99 residues: Prostate and testis expressed protein 4 (99 aa).

Residues 1–23 (MNSVTKISTLLIVILSFLCFVEG) form the signal peptide. In terms of domain architecture, UPAR/Ly6 spans 24-99 (LICNSCEKSR…CCEKNLCNSF (76 aa)). 4 cysteine pairs are disulfide-bonded: C26–C52, C29–C37, C44–C70, and C74–C90.

Expressed in prostate, testis, eye, kidney and skeletal muscle. Expressed in the dorsal lobe of prostate. Not expressed in the ventral lobe of prostate.

The protein localises to the secreted. Functionally, enhances sperm motility. Binds to calmodulin and inhibits calcium transport into spermatozoa. May modulate the function of nicotinic acetylcholine receptors. This Mus musculus (Mouse) protein is Prostate and testis expressed protein 4 (Pate4).